Consider the following 41-residue polypeptide: Photosystem I reaction center subunit IX (41 aa).

A helical membrane pass occupies residues 7 to 27 (YLSTAPVVAFAWITITAGLLI).

This sequence belongs to the PsaJ family.

Its subcellular location is the plastid. It is found in the chloroplast thylakoid membrane. Its function is as follows. May help in the organization of the PsaE and PsaF subunits. The protein is Photosystem I reaction center subunit IX of Oedogonium cardiacum (Filamentous green alga).